Reading from the N-terminus, the 237-residue chain is Uridylate kinase (237 aa).

11-14 (KLSG) is an ATP binding site. Position 53 (G53) interacts with UMP. 2 residues coordinate ATP: G54 and R58. UMP is bound by residues D73 and 134 to 141 (TGNPFFTT). ATP-binding residues include T161, Y167, and D170.

This sequence belongs to the UMP kinase family. Homohexamer.

The protein resides in the cytoplasm. The catalysed reaction is UMP + ATP = UDP + ADP. The protein operates within pyrimidine metabolism; CTP biosynthesis via de novo pathway; UDP from UMP (UMPK route): step 1/1. Inhibited by UTP. Its function is as follows. Catalyzes the reversible phosphorylation of UMP to UDP. The chain is Uridylate kinase from Burkholderia vietnamiensis (strain G4 / LMG 22486) (Burkholderia cepacia (strain R1808)).